Consider the following 767-residue polypeptide: 5-methyltetrahydropteroyltriglutamate--homocysteine methyltransferase (767 aa).

Lys126 provides a ligand contact to 5-methyltetrahydropteroyltri-L-glutamate. Residues 445-447 (IGS) and Glu498 each bind L-homocysteine. Residues 445–447 (IGS) and Glu498 each bind L-methionine. 5-methyltetrahydropteroyltri-L-glutamate is bound by residues 529–530 (RC) and Trp575. Asp613 lines the L-homocysteine pocket. L-methionine is bound at residue Asp613. Position 619 (Glu619) interacts with 5-methyltetrahydropteroyltri-L-glutamate. Residues His655, Cys657, and Glu679 each contribute to the Zn(2+) site. Catalysis depends on His708, which acts as the Proton donor. Cys740 provides a ligand contact to Zn(2+).

The protein belongs to the vitamin-B12 independent methionine synthase family. The cofactor is Zn(2+).

The enzyme catalyses 5-methyltetrahydropteroyltri-L-glutamate + L-homocysteine = tetrahydropteroyltri-L-glutamate + L-methionine. Its pathway is amino-acid biosynthesis; L-methionine biosynthesis via de novo pathway; L-methionine from L-homocysteine (MetE route): step 1/1. In terms of biological role, catalyzes the transfer of a methyl group from 5-methyltetrahydrofolate to homocysteine resulting in methionine formation. The chain is 5-methyltetrahydropteroyltriglutamate--homocysteine methyltransferase from Psychromonas ingrahamii (strain DSM 17664 / CCUG 51855 / 37).